We begin with the raw amino-acid sequence, 205 residues long: Thymidylate kinase (205 aa).

Position 10 to 17 (10 to 17 (GIDGAGKT)) interacts with ATP.

This sequence belongs to the thymidylate kinase family.

It catalyses the reaction dTMP + ATP = dTDP + ADP. Phosphorylation of dTMP to form dTDP in both de novo and salvage pathways of dTTP synthesis. This is Thymidylate kinase from Nitrosospira multiformis (strain ATCC 25196 / NCIMB 11849 / C 71).